Here is a 243-residue protein sequence, read N- to C-terminus: Segregation and condensation protein A (243 aa).

Belongs to the ScpA family. As to quaternary structure, component of a cohesin-like complex composed of ScpA, ScpB and the Smc homodimer, in which ScpA and ScpB bind to the head domain of Smc. The presence of the three proteins is required for the association of the complex with DNA.

It localises to the cytoplasm. In terms of biological role, participates in chromosomal partition during cell division. May act via the formation of a condensin-like complex containing Smc and ScpB that pull DNA away from mid-cell into both cell halves. This chain is Segregation and condensation protein A, found in Staphylococcus aureus (strain NCTC 8325 / PS 47).